The chain runs to 212 residues: Imidazole glycerol phosphate synthase subunit HisH (212 aa).

Residues 1–211 (MIGVIDYGMG…KQFTQEQKVK (211 aa)) enclose the Glutamine amidotransferase type-1 domain. Residue Cys79 is the Nucleophile of the active site. Active-site residues include His186 and Glu188.

In terms of assembly, heterodimer of HisH and HisF.

It is found in the cytoplasm. It catalyses the reaction 5-[(5-phospho-1-deoxy-D-ribulos-1-ylimino)methylamino]-1-(5-phospho-beta-D-ribosyl)imidazole-4-carboxamide + L-glutamine = D-erythro-1-(imidazol-4-yl)glycerol 3-phosphate + 5-amino-1-(5-phospho-beta-D-ribosyl)imidazole-4-carboxamide + L-glutamate + H(+). It carries out the reaction L-glutamine + H2O = L-glutamate + NH4(+). Its pathway is amino-acid biosynthesis; L-histidine biosynthesis; L-histidine from 5-phospho-alpha-D-ribose 1-diphosphate: step 5/9. IGPS catalyzes the conversion of PRFAR and glutamine to IGP, AICAR and glutamate. The HisH subunit catalyzes the hydrolysis of glutamine to glutamate and ammonia as part of the synthesis of IGP and AICAR. The resulting ammonia molecule is channeled to the active site of HisF. The polypeptide is Imidazole glycerol phosphate synthase subunit HisH (Bacillus licheniformis (strain ATCC 14580 / DSM 13 / JCM 2505 / CCUG 7422 / NBRC 12200 / NCIMB 9375 / NCTC 10341 / NRRL NRS-1264 / Gibson 46)).